The primary structure comprises 778 residues: Hyaluronate lyase (778 aa).

The segment at residues 1–33 is a signal peptide (tat-type signal); it reads MSWNRRSFLGALGVTCLAGAGMVPIVRPRTAAA. Catalysis depends on residues Asn-200, His-250, and Tyr-259.

The protein belongs to the polysaccharide lyase 8 family. In terms of processing, predicted to be exported by the Tat system. The position of the signal peptide cleavage has not been experimentally proven.

The catalysed reaction is [hyaluronan](n) = n 3-(4-deoxy-beta-D-gluc-4-enuronosyl)-N-acetyl-D-glucosamine + H2O. With respect to regulation, is salt-dependent and is active over a wide range of NaCl concentrations. Activity is slightly promoted by Ni(2+), and inhibited by most of the tested metal ions, including Li(+), K(+), Ba(2+), Mg(2+), Zn(2+), Ca(2+), Mn(2+) and Al(3+). Its function is as follows. Degrades hyaluronic acid into unsaturated disaccharides as the end products. Exhibits very low activity against various types of chondroitin sulfate variants. This is Hyaluronate lyase from Thermasporomyces composti.